A 432-amino-acid chain; its full sequence is Trigger factor (432 aa).

One can recognise a PPIase FKBP-type domain in the interval 165 to 250 (GDFAKIDFEG…LKEIQVKAPQ (86 aa)).

Belongs to the FKBP-type PPIase family. Tig subfamily.

Its subcellular location is the cytoplasm. The catalysed reaction is [protein]-peptidylproline (omega=180) = [protein]-peptidylproline (omega=0). Functionally, involved in protein export. Acts as a chaperone by maintaining the newly synthesized protein in an open conformation. Functions as a peptidyl-prolyl cis-trans isomerase. This chain is Trigger factor, found in Wolinella succinogenes (strain ATCC 29543 / DSM 1740 / CCUG 13145 / JCM 31913 / LMG 7466 / NCTC 11488 / FDC 602W) (Vibrio succinogenes).